A 144-amino-acid polypeptide reads, in one-letter code: D-aminoacyl-tRNA deacylase (144 aa).

The short motif at 136-137 (GP) is the Gly-cisPro motif, important for rejection of L-amino acids element.

This sequence belongs to the DTD family. As to quaternary structure, homodimer.

It localises to the cytoplasm. The enzyme catalyses glycyl-tRNA(Ala) + H2O = tRNA(Ala) + glycine + H(+). The catalysed reaction is a D-aminoacyl-tRNA + H2O = a tRNA + a D-alpha-amino acid + H(+). Functionally, an aminoacyl-tRNA editing enzyme that deacylates mischarged D-aminoacyl-tRNAs. Also deacylates mischarged glycyl-tRNA(Ala), protecting cells against glycine mischarging by AlaRS. Acts via tRNA-based rather than protein-based catalysis; rejects L-amino acids rather than detecting D-amino acids in the active site. By recycling D-aminoacyl-tRNA to D-amino acids and free tRNA molecules, this enzyme counteracts the toxicity associated with the formation of D-aminoacyl-tRNA entities in vivo and helps enforce protein L-homochirality. The protein is D-aminoacyl-tRNA deacylase of Pasteurella multocida (strain Pm70).